We begin with the raw amino-acid sequence, 78 residues long: Large ribosomal subunit protein uL24 (78 aa).

It belongs to the universal ribosomal protein uL24 family. Part of the 50S ribosomal subunit.

In terms of biological role, one of two assembly initiator proteins, it binds directly to the 5'-end of the 23S rRNA, where it nucleates assembly of the 50S subunit. Its function is as follows. One of the proteins that surrounds the polypeptide exit tunnel on the outside of the subunit. The sequence is that of Large ribosomal subunit protein uL24 from Helicobacter hepaticus (strain ATCC 51449 / 3B1).